Consider the following 213-residue polypeptide: Protein Nef (213 aa).

G2 carries the N-myristoyl glycine; by host lipid modification. An acidic; interacts with host PACS1 and PACS2; stabilizes the interaction of NEF/MHC-I with host AP1M1; necessary for MHC-I internalization region spans residues 68-71 (QEEE). Positions 75–84 (PVAPQVPLRP) are SH3-binding; interaction with Src family tyrosine kinases. Residues 78 to 81 (PQVP) carry the PxxP; stabilizes the interaction of NEF/MHC-I with host AP1M1; necessary for MHC-I internalization motif. The mediates dimerization, Nef-PTE1 interaction stretch occupies residues 114 to 130 (EILDLWVYNTQGFFPDW). The tract at residues 154-187 (VSEEEAERLGNTCERANLLHPACAHGFEDTHKEI) is binding to ATP6V1H. Positions 171-172 (LL) match the Dileucine internalization motif; necessary for CD4 internalization motif. A Diacidic; necessary for CD4 internalization motif is present at residues 181–182 (ED).

This sequence belongs to the lentivirus primate group Nef protein family. As to quaternary structure, monomer; cytosolic form. Homodimer; membrane bound form. Interacts with Nef associated p21-activated kinase (PAK2); this interaction activates PAK2. Associates with the Nef-MHC-I-AP1 complex; this complex is required for MHC-I internalization. Interacts (via C-terminus) with host PI3-kinase. Interacts with host PACS1; this interaction seems to be weak. Interacts with host PACS2. Interacts with host LCK and MAPK3; these interactions inhibit the kinase activity of the latter. Interacts with host ATP6V1H; this interaction may play a role in CD4 endocytosis. Associates with the CD4-Nef-AP2 complex; this complex is required for CD4 internalization. Interacts with host AP2 subunit alpha and AP2 subunit sigma2. Interacts with TCR-zeta chain; this interaction up-regulates the Fas ligand (FasL) surface expression. Interacts with host HCK, LYN, and SRC; these interactions activate the Src family kinases. Interacts with MAP3K5; this interaction inhibits the Fas and TNFR-mediated death signals. Interacts with beta-COP and PTE1. Interacts with human RACK1; this increases Nef phosphorylation by PKC. Interacts with TP53; this interaction decreases the half-life of TP53, protecting the infected cell against p53-mediated apoptosis. Post-translationally, the virion-associated Nef proteins are cleaved by the viral protease to release the soluble C-terminal core protein. Nef is probably cleaved concomitantly with viral structural proteins on maturation of virus particles. Myristoylated. In terms of processing, phosphorylated on serine residues, probably by host PKCdelta and theta.

The protein resides in the host cell membrane. It is found in the virion. Its subcellular location is the secreted. It localises to the host Golgi apparatus membrane. Its function is as follows. Factor of infectivity and pathogenicity, required for optimal virus replication. Alters numerous pathways of T-lymphocyte function and down-regulates immunity surface molecules in order to evade host defense and increase viral infectivity. Alters the functionality of other immunity cells, like dendritic cells, monocytes/macrophages and NK cells. Functionally, in infected CD4(+) T-lymphocytes, down-regulates the surface MHC-I, mature MHC-II, CD4, CD28, CCR5 and CXCR4 molecules. Mediates internalization and degradation of host CD4 through the interaction of with the cytoplasmic tail of CD4, the recruitment of AP-2 (clathrin adapter protein complex 2), internalization through clathrin coated pits, and subsequent transport to endosomes and lysosomes for degradation. Diverts host MHC-I molecules to the trans-Golgi network-associated endosomal compartments by an endocytic pathway to finally target them for degradation. MHC-I down-regulation may involve AP-1 (clathrin adapter protein complex 1) or possibly Src family kinase-ZAP70/Syk-PI3K cascade recruited by PACS2. In consequence infected cells are masked for immune recognition by cytotoxic T-lymphocytes. Decreasing the number of immune receptors also prevents reinfection by more HIV particles (superinfection). Down-regulates host SERINC3 and SERINC5 thereby excluding these proteins from the viral particles. Virion infectivity is drastically higher when SERINC3 or SERINC5 are excluded from the viral envelope, because these host antiviral proteins impair the membrane fusion event necessary for subsequent virion penetration. Bypasses host T-cell signaling by inducing a transcriptional program nearly identical to that of anti-CD3 cell activation. Interaction with TCR-zeta chain up-regulates the Fas ligand (FasL). Increasing surface FasL molecules and decreasing surface MHC-I molecules on infected CD4(+) cells send attacking cytotoxic CD8+ T-lymphocytes into apoptosis. In terms of biological role, plays a role in optimizing the host cell environment for viral replication without causing cell death by apoptosis. Protects the infected cells from apoptosis in order to keep them alive until the next virus generation is ready to strike. Inhibits the Fas and TNFR-mediated death signals by blocking MAP3K5/ASK1. Decreases the half-life of TP53, protecting the infected cell against p53-mediated apoptosis. Inhibits the apoptotic signals regulated by the Bcl-2 family proteins through the formation of a Nef/PI3-kinase/PAK2 complex that leads to activation of PAK2 and induces phosphorylation of host BAD. Its function is as follows. Extracellular Nef protein targets CD4(+) T-lymphocytes for apoptosis by interacting with CXCR4 surface receptors. The protein is Protein Nef of Human immunodeficiency virus type 1 group O (isolate ANT70) (HIV-1).